The following is a 337-amino-acid chain: MALQALHSSGVGLRRILAHFPEDLSLAFAYGSAVYRQAGPSAHQENPMLDLVFTVDDPVAWHAMNLKKNWSHYSLLKLLGPRIISSVQNNYGAGVYFNPLIMCDGKLIKYGVISTGTLIEDLLNWNNLYIAGRLQKPVKIVSMNESTVLRAALDKNLKSAVTTACLMLPESFSEEDLFIEIAGLSYSGDFRMVIGEEKAKVLNIVKPNVVHFRELYESILQKDPQMVYKMHQGQLEIDKSPEGQFTQLMTLPRTLQQHINHIMDPPGRNRDVEETLLQVAQDPDCGDVVRLAVSSIVRPSSIRQSTKGLFTAGVKKSVIYSSRKLNKMWKGWVRKTS.

The protein belongs to the TAM41 family. Mg(2+) is required as a cofactor. As to expression, brain and liver.

The protein resides in the mitochondrion inner membrane. The catalysed reaction is a 1,2-diacyl-sn-glycero-3-phosphate + CTP + H(+) = a CDP-1,2-diacyl-sn-glycerol + diphosphate. It participates in phospholipid metabolism; CDP-diacylglycerol biosynthesis; CDP-diacylglycerol from sn-glycerol 3-phosphate: step 3/3. Catalyzes the conversion of phosphatidic acid (PA) to CDP-diacylglycerol (CDP-DAG), an essential intermediate in the synthesis of phosphatidylglycerol, cardiolipin and phosphatidylinositol. In Rattus norvegicus (Rat), this protein is Phosphatidate cytidylyltransferase, mitochondrial (Tamm41).